The primary structure comprises 1303 residues: Ninein-like protein (1303 aa).

2 consecutive EF-hand domains span residues 8–43 (RYVA…LSLD) and 61–77 (RVNF…VLSR). A disordered region spans residues 107 to 135 (TKRYGRRSRPDKTDLELTADSDSLPFGTD). 2 EF-hand domains span residues 203-238 (VTDG…IGLK) and 240-275 (LEAE…PHDH). Asp-253, Asp-255, Asp-257, Lys-259, and Glu-264 together coordinate Ca(2+). Positions 464–590 (EYESEVLLEQ…CSELELLKSQ (127 aa)) form a coiled coil. The segment covering 592–617 (SGKRTRLSRSSLPANDWSNRRALTTE) has biased composition (polar residues). A disordered region spans residues 592–634 (SGKRTRLSRSSLPANDWSNRRALTTESDSDDPEMKKGTSPQVR). 3 coiled-coil regions span residues 660–791 (ELAM…LEAE), 821–876 (LAVL…LSAR), and 919–1146 (SKQL…VQAQ). Residues 1156 to 1181 (EQMGSGTQEHASHLQTQLAEQQRRTQ) are disordered. Residues 1159-1175 (GSGTQEHASHLQTQLAE) show a composition bias toward polar residues. The stretch at 1202 to 1278 (QEQYEKLMAS…EQRQKSAEKK (77 aa)) forms a coiled coil.

It localises to the cytoplasm. Its subcellular location is the cytoskeleton. The protein localises to the microtubule organizing center. It is found in the centrosome. Functionally, required for the intracellular transport of organelles and vesicles, and is essential for the photoreceptor's outer segments formation, maintenance and function. The chain is Ninein-like protein (Ninl) from Danio rerio (Zebrafish).